Here is a 207-residue protein sequence, read N- to C-terminus: ATP-dependent Clp protease proteolytic subunit (207 aa).

Catalysis depends on S111, which acts as the Nucleophile. H136 is an active-site residue.

This sequence belongs to the peptidase S14 family. As to quaternary structure, fourteen ClpP subunits assemble into 2 heptameric rings which stack back to back to give a disk-like structure with a central cavity, resembling the structure of eukaryotic proteasomes.

The protein resides in the cytoplasm. The catalysed reaction is Hydrolysis of proteins to small peptides in the presence of ATP and magnesium. alpha-casein is the usual test substrate. In the absence of ATP, only oligopeptides shorter than five residues are hydrolyzed (such as succinyl-Leu-Tyr-|-NHMec, and Leu-Tyr-Leu-|-Tyr-Trp, in which cleavage of the -Tyr-|-Leu- and -Tyr-|-Trp bonds also occurs).. Functionally, cleaves peptides in various proteins in a process that requires ATP hydrolysis. Has a chymotrypsin-like activity. Plays a major role in the degradation of misfolded proteins. This is ATP-dependent Clp protease proteolytic subunit from Yersinia pseudotuberculosis serotype O:1b (strain IP 31758).